The following is a 471-amino-acid chain: Probable ribonuclease FAU-1 (471 aa).

It belongs to the FAU-1 family.

In terms of biological role, probable RNase involved in rRNA stability through maturation and/or degradation of precursor rRNAs. Binds to RNA in loop regions with AU-rich sequences. In Thermococcus gammatolerans (strain DSM 15229 / JCM 11827 / EJ3), this protein is Probable ribonuclease FAU-1.